The sequence spans 309 residues: tRNA dimethylallyltransferase (309 aa).

ATP is bound at residue Gly-11–Ser-18. Position 13–18 (Thr-13–Ser-18) interacts with substrate.

Belongs to the IPP transferase family. In terms of assembly, monomer. It depends on Mg(2+) as a cofactor.

The enzyme catalyses adenosine(37) in tRNA + dimethylallyl diphosphate = N(6)-dimethylallyladenosine(37) in tRNA + diphosphate. Functionally, catalyzes the transfer of a dimethylallyl group onto the adenine at position 37 in tRNAs that read codons beginning with uridine, leading to the formation of N6-(dimethylallyl)adenosine (i(6)A). The sequence is that of tRNA dimethylallyltransferase from Rhodococcus jostii (strain RHA1).